The primary structure comprises 122 residues: Large ribosomal subunit protein uL14 (122 aa).

This sequence belongs to the universal ribosomal protein uL14 family. As to quaternary structure, part of the 50S ribosomal subunit. Forms a cluster with proteins L3 and L19. In the 70S ribosome, L14 and L19 interact and together make contacts with the 16S rRNA in bridges B5 and B8.

Functionally, binds to 23S rRNA. Forms part of two intersubunit bridges in the 70S ribosome. In Shewanella sp. (strain ANA-3), this protein is Large ribosomal subunit protein uL14.